The primary structure comprises 159 residues: Protein A40 (159 aa).

The Cytoplasmic segment spans residues 1-9 (MNKHKTDYA). A helical; Signal-anchor for type II membrane protein transmembrane segment spans residues 10–30 (GYACCVICGLIVGIIFTATLL). Topologically, residues 31–159 (KVVERKLVHT…TPKLHSCYTI (129 aa)) are extracellular. The region spanning 63–159 (YNNKCIHLST…TPKLHSCYTI (97 aa)) is the C-type lectin domain.

Belongs to the poxviridae A40 protein family.

It is found in the host membrane. This Bos taurus (Bovine) protein is Protein A40.